Here is a 552-residue protein sequence, read N- to C-terminus: Cation transporter HKT1;1 (552 aa).

Residues 1 to 70 lie on the Cytoplasmic side of the membrane; the sequence is MHPPSLVLDT…QSYSFLVCKS (70 aa). The next 2 helical transmembrane spans lie at 71–91 and 133–153; these read NPLVVQLVYFVIISFAGFLAL and LWVLILLMLMGGEVFTSMLGL. Residues 154–221 lie on the Cytoplasmic side of the membrane; it reads YFNNANANRN…TYNPCAVLVR (68 aa). Helical transmembrane passes span 222-242 and 291-311; these read IVTGYFVATVISSSVIIIIYF and VLLLLVIPQILAGNTLFSPLL. The Cytoplasmic portion of the chain corresponds to 312-348; that stretch reads RLCVWVLGKVSGKAEYAYILQHPGETGYKHLHVRRNS. 2 consecutive transmembrane segments (helical) span residues 349–369 and 402–422; these read VYIVLSVTGLILLQVMFICSF and ILDISTLSPSTLLLFAVVMYL. The Cytoplasmic portion of the chain corresponds to 423 to 448; the sequence is PSDASFLTANADNQPLTDKKTNSISR. The next 2 helical transmembrane spans lie at 449-471 and 524-544; these read ALWRNFTVNKLSCLAMFTFLACI and GFVGRWTEEGKLIVILVMFLG. Residues 545-552 are Cytoplasmic-facing; the sequence is RLKEFILK.

Belongs to the TrkH potassium transport family. HKT (TC 2.A.38.3) subfamily. Expressed in shoots. In roots, expressed in epidermis, exodermis, cortex, and sieve elements and companion cells of phloem. In mature leaves, expressed in large highly vacuolated cells of the adaxial epidermis, phloem and xylem.

The protein resides in the membrane. It catalyses the reaction Na(+)(in) = Na(+)(out). In terms of biological role, functions as a low-affinity sodium transporter. In Oryza sativa subsp. japonica (Rice), this protein is Cation transporter HKT1;1.